A 354-amino-acid chain; its full sequence is Methylthioribose-1-phosphate isomerase (354 aa).

Residues 58 to 60 (RGA), arginine 101, and glutamine 204 each bind substrate. Aspartate 245 serves as the catalytic Proton donor. Residue 255-256 (NK) participates in substrate binding.

It belongs to the eIF-2B alpha/beta/delta subunits family. MtnA subfamily.

It catalyses the reaction 5-(methylsulfanyl)-alpha-D-ribose 1-phosphate = 5-(methylsulfanyl)-D-ribulose 1-phosphate. The protein operates within amino-acid biosynthesis; L-methionine biosynthesis via salvage pathway; L-methionine from S-methyl-5-thio-alpha-D-ribose 1-phosphate: step 1/6. Functionally, catalyzes the interconversion of methylthioribose-1-phosphate (MTR-1-P) into methylthioribulose-1-phosphate (MTRu-1-P). The polypeptide is Methylthioribose-1-phosphate isomerase (Xylella fastidiosa (strain 9a5c)).